The sequence spans 535 residues: Sodium channel protein Nach (535 aa).

The Cytoplasmic portion of the chain corresponds to 1–49 (MGHQEELKPEQVDLKVTPFVGYLRRTWSDFCATSSIHGLKYTRDEDTNK). The chain crosses the membrane as a helical span at residues 50–70 (IVHLVWLLISVVMFICAVVMA). Topologically, residues 71 to 471 (RTFYMDYRSS…LVSNLGSAFS (401 aa)) are extracellular. Residues N165, N239, and N367 are each glycosylated (N-linked (GlcNAc...) asparagine). A helical membrane pass occupies residues 472–492 (LFVGMSMLSVVEIIYYFSVIL). Over 493–535 (RKNYKLECETRSQMLHKKPKFAWPKANDTHSKEQKSVFIIHKS) the chain is Cytoplasmic.

The protein belongs to the amiloride-sensitive sodium channel (TC 1.A.6) family. In terms of tissue distribution, embryonic and larval tracheal system; dorsal trunk (but not at fusion with transverse connective), several branches and terminal cells. Also expressed in adult tracheal system; dorsal trunk, but not at the spiracles.

The protein localises to the membrane. Part of a complex that plays a role in tracheal liquid clearance. Probable role in sodium transport. The chain is Sodium channel protein Nach (Nach) from Drosophila melanogaster (Fruit fly).